Consider the following 365-residue polypeptide: Peptide chain release factor 2 (365 aa).

The residue at position 252 (Q252) is an N5-methylglutamine.

The protein belongs to the prokaryotic/mitochondrial release factor family. In terms of processing, methylated by PrmC. Methylation increases the termination efficiency of RF2.

It localises to the cytoplasm. Its function is as follows. Peptide chain release factor 2 directs the termination of translation in response to the peptide chain termination codons UGA and UAA. The protein is Peptide chain release factor 2 (prfB) of Haemophilus influenzae (strain ATCC 51907 / DSM 11121 / KW20 / Rd).